Consider the following 199-residue polypeptide: Thymidylate kinase (199 aa).

7 to 14 serves as a coordination point for ATP; sequence GTEGVGKT.

This sequence belongs to the thymidylate kinase family.

The catalysed reaction is dTMP + ATP = dTDP + ADP. Its function is as follows. Phosphorylation of dTMP to form dTDP in both de novo and salvage pathways of dTTP synthesis. This Acinetobacter baumannii (strain AB307-0294) protein is Thymidylate kinase.